The primary structure comprises 209 residues: Pyridoxine/pyridoxamine 5'-phosphate oxidase (209 aa).

Residues R7 to Y10 and K64 each bind substrate. FMN contacts are provided by residues R59–K64, F74–T75, and K81. The substrate site is built by Y121, R125, and S129. FMN is bound by residues Q138–S139, W182, and R192.

This sequence belongs to the pyridoxamine 5'-phosphate oxidase family. Homodimer. Requires FMN as cofactor.

The enzyme catalyses pyridoxamine 5'-phosphate + O2 + H2O = pyridoxal 5'-phosphate + H2O2 + NH4(+). It catalyses the reaction pyridoxine 5'-phosphate + O2 = pyridoxal 5'-phosphate + H2O2. The protein operates within cofactor metabolism; pyridoxal 5'-phosphate salvage; pyridoxal 5'-phosphate from pyridoxamine 5'-phosphate: step 1/1. It functions in the pathway cofactor metabolism; pyridoxal 5'-phosphate salvage; pyridoxal 5'-phosphate from pyridoxine 5'-phosphate: step 1/1. Catalyzes the oxidation of either pyridoxine 5'-phosphate (PNP) or pyridoxamine 5'-phosphate (PMP) into pyridoxal 5'-phosphate (PLP). This Haemophilus ducreyi (strain 35000HP / ATCC 700724) protein is Pyridoxine/pyridoxamine 5'-phosphate oxidase.